A 140-amino-acid polypeptide reads, in one-letter code: 3-hydroxyacyl-[acyl-carrier-protein] dehydratase FabZ (140 aa).

Residue histidine 47 is part of the active site.

This sequence belongs to the thioester dehydratase family. FabZ subfamily.

The protein resides in the cytoplasm. The enzyme catalyses a (3R)-hydroxyacyl-[ACP] = a (2E)-enoyl-[ACP] + H2O. In terms of biological role, involved in unsaturated fatty acids biosynthesis. Catalyzes the dehydration of short chain beta-hydroxyacyl-ACPs and long chain saturated and unsaturated beta-hydroxyacyl-ACPs. The polypeptide is 3-hydroxyacyl-[acyl-carrier-protein] dehydratase FabZ (Streptococcus equi subsp. equi (strain 4047)).